The primary structure comprises 232 residues: Probable proteasome subunit alpha type-5 (232 aa).

The protein belongs to the peptidase T1A family. In terms of assembly, the 26S proteasome consists of a 20S proteasome core and two 19S regulatory subunits. The 20S proteasome core is composed of 28 subunits that are arranged in four stacked rings, resulting in a barrel-shaped structure. The two end rings are each formed by seven alpha subunits, and the two central rings are each formed by seven beta subunits. The catalytic chamber with the active sites is on the inside of the barrel.

It is found in the cytoplasm. It localises to the nucleus. In terms of biological role, the proteasome degrades poly-ubiquitinated proteins in the cytoplasm and in the nucleus. It is essential for the regulated turnover of proteins and for the removal of misfolded proteins. The proteasome is a multicatalytic proteinase complex that is characterized by its ability to cleave peptides with Arg, Phe, Tyr, Leu, and Glu adjacent to the leaving group at neutral or slightly basic pH. It has an ATP-dependent proteolytic activity. The polypeptide is Probable proteasome subunit alpha type-5 (PUP2) (Encephalitozoon cuniculi (strain GB-M1) (Microsporidian parasite)).